The following is a 78-amino-acid chain: Mandibular organ-inhibiting hormone 1 (78 aa).

Cystine bridges form between cysteine 7–cysteine 44, cysteine 24–cysteine 40, and cysteine 27–cysteine 53.

Belongs to the arthropod CHH/MIH/GIH/VIH hormone family. Produced by the medulla terminalis X-organ in the eyestalks and transported to the sinus gland where it is stored and released.

It is found in the secreted. In terms of biological role, represses the synthesis of methyl farnesoate, the precursor of insect juvenile hormone III in the mandibular organ. This Cancer pagurus (Rock crab) protein is Mandibular organ-inhibiting hormone 1.